The following is a 351-amino-acid chain: MSVWTTANNSGLETPTKSPITSSVPRAARSSAVITTGNHQQHHFQHVVAAAVAAATSVATGHQFQQQFPLHAHPHPQHHSNSPTGSGSNSNNSAGFQRTSISNSLLQFPPPPPPSSQNQAKPRGHHRTASSSMSQSGEDLHSPTYLSWRKLQLSRAKLKASSKTSALLSGFAMVAMVEVQLDHDTNVPPGMLIAFAICTTLLVAVHMLALMISTCILPNIETVCNLHSISLVHESPHERLHWYIETAWAFSTLLGLILFLLEIAILCWVKFYDLSPPAAWSACVVLIPVMIIFMAFAIHFYRSLVSHKYEVTVSGIRELEMLKEQMEQDHLEHHNNIRNNGMNYGASGDIV.

Positions 1-21 (MSVWTTANNSGLETPTKSPIT) are enriched in polar residues. 2 disordered regions span residues 1-39 (MSVWTTANNSGLETPTKSPITSSVPRAARSSAVITTGNH) and 71-141 (HAHP…EDLH). The Cytoplasmic segment spans residues 1–163 (MSVWTTANNS…SRAKLKASSK (163 aa)). 2 stretches are compositionally biased toward low complexity: residues 22–33 (SSVPRAARSSAV) and 80–93 (SNSPTGSGSNSNNS). Positions 94–106 (AGFQRTSISNSLL) are enriched in polar residues. The chain crosses the membrane as a helical span at residues 164-181 (TSALLSGFAMVAMVEVQL). The Extracellular portion of the chain corresponds to 182–191 (DHDTNVPPGM). A helical transmembrane segment spans residues 192–212 (LIAFAICTTLLVAVHMLALMI). The Cytoplasmic segment spans residues 213–248 (STCILPNIETVCNLHSISLVHESPHERLHWYIETAW). A helical transmembrane segment spans residues 249 to 269 (AFSTLLGLILFLLEIAILCWV). The Extracellular portion of the chain corresponds to 270-277 (KFYDLSPP). The helical transmembrane segment at 278-298 (AAWSACVVLIPVMIIFMAFAI) threads the bilayer. Residues 299 to 351 (HFYRSLVSHKYEVTVSGIRELEMLKEQMEQDHLEHHNNIRNNGMNYGASGDIV) are Cytoplasmic-facing.

The protein belongs to the Orai family. Hexamer.

The protein resides in the cell membrane. The catalysed reaction is Ca(2+)(in) = Ca(2+)(out). Pore-forming subunit of inward rectifying Ca(2+) release-activated Ca(2+) (CRAC) channels. Assembles in hexameric CRAC channels that mediate Ca(2+) influx upon depletion of endoplasmic reticulum Ca(2+) store and channel activation by Ca(2+) sensor Stim, a process known as store-operated Ca(2+) entry (SOCE). Regulates transcription factor NFAT nuclear import. The sequence is that of Calcium release-activated calcium channel protein 1 from Drosophila melanogaster (Fruit fly).